The primary structure comprises 605 residues: MVRNKSVFVVLLFSLFLSFGLLCSAKDFPGRRSEDDPQQRYEDCRKRCQLETRGQTEQDKCEDRSETQLKEEQQRDGEDPQRRYQDCRQHCQQEERRLRPHCEQSCREQYEKQQQQQPDKQFKECQQRCQWQEQRPERKQQCVKECREQYQEDPWKGERENKWREEEEEESDEGEQQQRNNPYYFHRRSFQERFREEHGNFRVLQRFADKHHLLRGINEFRIAILEANPNTFVLPHHCDAEKIYVVTNGRGTVTFVTHENKESYNVVPGVVVRIPAGSTVYLANQDNREKLTIAVLHRPVNNPGQFQKFFPAGQENPQSYLRIFSREILEAVFNTRSEQLDELPGGRQSHRRQQGQGMFRKASQEQIRALSQGATSPRGKGSEGYAFNLLSQTPRYSNQNGRFYEACPRNFQQQLREVDSSVVAFEINKGSIFVPHYNSKATFVVLVTEGNGHVEMVCPHLSRQSSDWSSREEEEQEEQEVERRSGQYKRVRAQLSTGNLFVVPAGHPVTFVASQNEDLGLLGFGLYNGQDNKRIFVAGKTNNVRQWDRQAKELAFGVESRLVDEVFNNNPQESYFVSGRDRRGFDERRGSNNPLSPFLDFARLF.

An N-terminal signal peptide occupies residues 1–23 (MVRNKSVFVVLLFSLFLSFGLLC). Disordered stretches follow at residues 52–81 (TRGQ…EDPQ) and 157–181 (GERE…QRNN). Residues 166 to 175 (EEEEESDEGE) are compositionally biased toward acidic residues. Cupin type-1 domains lie at 183–341 (YYFH…EQLD) and 387–564 (FNLL…RLVD). The interval 465–485 (SSDWSSREEEEQEEQEVERRS) is disordered.

It belongs to the 7S seed storage protein family.

Its subcellular location is the vacuole. The protein resides in the aleurone grain. In terms of biological role, seed storage protein. This chain is Vicilin GC72-A, found in Gossypium hirsutum (Upland cotton).